A 501-amino-acid chain; its full sequence is Geissoschizine oxidase (501 aa).

Residues 1–21 traverse the membrane as a helical segment; it reads MEFSFSSPLLYILYFLLFFIV. Cysteine 442 serves as a coordination point for heme.

This sequence belongs to the cytochrome P450 family. Requires heme as cofactor.

Its subcellular location is the membrane. It catalyses the reaction (19E)-geissoschizine + reduced [NADPH--hemoprotein reductase] + O2 = akuammicine + formate + oxidized [NADPH--hemoprotein reductase] + H2O + H(+). Its pathway is alkaloid biosynthesis. In terms of biological role, a cytochrome P450 monooxygenase involved in the biosynthesis of strychnos monoterpene indole alkaloids (MIAs) natural products, compounds with effects on glucose absorption. Catalyzes the conversion of geissoschizine to akuammicine. The polypeptide is Geissoschizine oxidase (Alstonia scholaris (Dogbane)).